The following is a 337-amino-acid chain: Mitochondrial uncoupling protein 6 (337 aa).

Solcar repeat units follow at residues 4–136, 145–236, and 246–331; these read KPFL…LKRR, FPLV…VKEI, and GGIG…VRGL. 6 consecutive transmembrane segments (helical) span residues 6–26, 105–125, 151–171, 210–230, 252–272, and 304–324; these read FLEG…LDLI, PAAL…YSAT, ITAG…ADVA, RGSW…LATY, VAAS…IDVV, and YKGL…LFLT.

This sequence belongs to the mitochondrial carrier (TC 2.A.29) family.

The protein localises to the mitochondrion inner membrane. In terms of biological role, PUMPS are mitochondrial transporter proteins that create proton leaks across the inner mitochondrial membrane, thus uncoupling oxidative phosphorylation. This leads to a decrease in the efficiency of oxidative phosphorylation and an increase in heat production. May be involved in protecting plant cells against oxidative stress damage. Recombinant PUMP6, reconstituted into liposomes, transports a wide range of dicarboxylic acids including malate, oxaloacetate and succinate as well as phosphate, sulfate and thiosulfate. However, it is unknown if these transports are of any biological significance in vivo. The protein is Mitochondrial uncoupling protein 6 (PUMP6) of Arabidopsis thaliana (Mouse-ear cress).